Here is a 326-residue protein sequence, read N- to C-terminus: Flotillin-like protein FloA (326 aa).

The next 2 membrane-spanning stretches (helical) occupy residues 6 to 26 (IILF…GSSV) and 27 to 47 (SLWI…IVFM).

It belongs to the flotillin-like FloA family. In terms of assembly, homooligomerizes.

The protein localises to the cell membrane. Its subcellular location is the membrane raft. In terms of biological role, found in functional membrane microdomains (FMM) that may be equivalent to eukaryotic membrane rafts. FMMs are highly dynamic and increase in number as cells age. Flotillins are thought to be important factors in membrane fluidity. This is Flotillin-like protein FloA from Desulfosudis oleivorans (strain DSM 6200 / JCM 39069 / Hxd3) (Desulfococcus oleovorans).